A 479-amino-acid polypeptide reads, in one-letter code: Glutamate--tRNA ligase 2 (479 aa).

Positions 10 to 20 (PSPTGSLHIGG) match the 'HIGH' region motif. A 'KMSKS' region motif is present at residues 243-247 (KLSKR). Lys-246 contacts ATP.

The protein belongs to the class-I aminoacyl-tRNA synthetase family. Glutamate--tRNA ligase type 1 subfamily. Monomer.

The protein resides in the cytoplasm. The catalysed reaction is tRNA(Glu) + L-glutamate + ATP = L-glutamyl-tRNA(Glu) + AMP + diphosphate. In terms of biological role, catalyzes the attachment of glutamate to tRNA(Glu) in a two-step reaction: glutamate is first activated by ATP to form Glu-AMP and then transferred to the acceptor end of tRNA(Glu). The sequence is that of Glutamate--tRNA ligase 2 from Thermoanaerobacter pseudethanolicus (strain ATCC 33223 / 39E) (Clostridium thermohydrosulfuricum).